Consider the following 107-residue polypeptide: Disintegrin lebestatin (107 aa).

Residues 1–20 (MIQVLLVIICLAVFPFQGSS) form the signal peptide. Positions 21-64 (KTLKSGNVNDYEVVNPGTVTGLPKGAVEEKHEPMKGNTLQKFPL) are excised as a propeptide. Disulfide bonds link C65–C74, C70–C93, C71–C98, and C83–C100. A Disintegrin domain is found at 65–105 (CTTGPCCRQCKLKPAGTTCWKTSRTSHYCTGKSCDCPSYPG). The Cell attachment site; atypical (KTS) signature appears at 85-87 (KTS). A propeptide spanning residues 106 to 107 (NG) is cleaved from the precursor.

In terms of assembly, monomer. In terms of tissue distribution, expressed by the venom gland.

It is found in the secreted. Functionally, specifically interacts with the alpha-1/beta-1 integrin (ITGA1/ITGB1). Exhibits highly inhibitory effects on cell adhesion and cell migration to collagens I and IV. Also shows in vivo anti-angiogenic activity. This chain is Disintegrin lebestatin, found in Macrovipera lebetinus (Levantine viper).